Reading from the N-terminus, the 1088-residue chain is Platelet-derived growth factor receptor alpha (1088 aa).

Residues 1 to 23 form the signal peptide; it reads MGTSQAFLVLSCLLTGPSLIVCQ. Ig-like C2-type domains lie at 24 to 112, 116 to 200, 201 to 305, 318 to 409, and 413 to 516; these read LLLP…SEIE, IYIY…FKTS, EFNV…KTVT, PTFG…FELS, and PASI…LKLV. Over 24–527 the chain is Extracellular; the sequence is LLLPSILPNE…PSLRSELTVA (504 aa). Cys-48 and Cys-99 are joined by a disulfide. N-linked (GlcNAc...) asparagine glycosylation is found at Asn-75, Asn-102, and Asn-178. 2 disulfide bridges follow: Cys-149–Cys-188 and Cys-234–Cys-289. N-linked (GlcNAc...) asparagine glycosylation is found at Asn-352, Asn-358, Asn-457, and Asn-467. Cys-434 and Cys-500 are joined by a disulfide. Residues 528-548 form a helical membrane-spanning segment; the sequence is AAVLVLLVIVIVSLIVLVVIW. The Cytoplasmic portion of the chain corresponds to 549 to 1088; it reads KQKPRYEIRW…SSDLVEDSFL (540 aa). Tyr-571 and Tyr-573 each carry phosphotyrosine; by autocatalysis. Positions 592-953 constitute a Protein kinase domain; sequence LVLGRILGSG…HLSEIVENLL (362 aa). ATP contacts are provided by residues 598-606 and Lys-626; that span reads LGSGAFGKV. Phosphotyrosine; by autocatalysis occurs at positions 719, 730, 741, 753, 761, and 767. Asp-817 acts as the Proton acceptor in catalysis. Residues Tyr-848, Tyr-987, and Tyr-1017 each carry the phosphotyrosine; by autocatalysis modification. Positions 1017 to 1088 are disordered; that stretch reads YIIPLPDIDP…SSDLVEDSFL (72 aa). The segment covering 1040–1058 has biased composition (polar residues); it reads SSQTSEESAIETGSSSSTF. Positions 1064-1088 are enriched in acidic residues; the sequence is ETIEDIDMMDDIGIDSSDLVEDSFL.

The protein belongs to the protein kinase superfamily. Tyr protein kinase family. CSF-1/PDGF receptor subfamily. As to quaternary structure, interacts with homodimeric PDGFA, PDGFB and PDGFC, and with heterodimers formed by PDGFA and PDGFB. Monomer in the absence of bound ligand. Interaction with dimeric PDGFA, PDGFB and/or PDGFC leads to receptor dimerization, where both PDGFRA homodimers and heterodimers with PDGFRB are observed. Interacts (tyrosine phosphorylated) with SHB (via SH2 domain). Interacts (tyrosine phosphorylated) with SHF (via SH2 domain). Interacts (tyrosine phosphorylated) with SRC (via SH2 domain). Interacts (tyrosine phosphorylated) with PIK3R1. Interacts (tyrosine phosphorylated) with PLCG1 (via SH2 domain). Interacts (tyrosine phosphorylated) with CRK, GRB2 and GRB7. Interacts with CD248; this interaction promotes PDGF receptor signaling pathway. In terms of processing, ubiquitinated, leading to its internalization and degradation. Post-translationally, autophosphorylated on tyrosine residues upon ligand binding. Autophosphorylation occurs in trans, i.e. one subunit of the dimeric receptor phosphorylates tyrosine residues on the other subunit. Phosphorylation at Tyr-730 and Tyr-741 is important for interaction with PIK3R1. Phosphorylation at Tyr-719 and Tyr-753 is important for interaction with PTPN11. Phosphorylation at Tyr-761 is important for interaction with CRK. Phosphorylation at Tyr-571 and Tyr-573 is important for interaction with SRC and SRC family members. Phosphorylation at Tyr-987 and Tyr-1017 is important for interaction with PLCG1.

The protein localises to the cell membrane. The protein resides in the cell projection. It is found in the cilium. It localises to the golgi apparatus. It catalyses the reaction L-tyrosyl-[protein] + ATP = O-phospho-L-tyrosyl-[protein] + ADP + H(+). Its activity is regulated as follows. Present in an inactive conformation in the absence of bound ligand. Binding of PDGFA and/or PDGFB leads to dimerization and activation by autophosphorylation on tyrosine residues. Inhibited by imatinib, nilotinib and sorafenib. Functionally, tyrosine-protein kinase that acts as a cell-surface receptor for PDGFA, PDGFB and PDGFC and plays an essential role in the regulation of embryonic development, cell proliferation, survival and chemotaxis. Depending on the context, promotes or inhibits cell proliferation and cell migration. Plays an important role in the differentiation of bone marrow-derived mesenchymal stem cells. Required for normal skeleton development and cephalic closure during embryonic development. Required for normal development of the mucosa lining the gastrointestinal tract, and for recruitment of mesenchymal cells and normal development of intestinal villi. Plays a role in cell migration and chemotaxis in wound healing. Plays a role in platelet activation, secretion of agonists from platelet granules, and in thrombin-induced platelet aggregation. Binding of its cognate ligands - homodimeric PDGFA, homodimeric PDGFB, heterodimers formed by PDGFA and PDGFB or homodimeric PDGFC -leads to the activation of several signaling cascades; the response depends on the nature of the bound ligand and is modulated by the formation of heterodimers between PDGFRA and PDGFRB. Phosphorylates PIK3R1, PLCG1, and PTPN11. Activation of PLCG1 leads to the production of the cellular signaling molecules diacylglycerol and inositol 1,4,5-trisphosphate, mobilization of cytosolic Ca(2+) and the activation of protein kinase C. Phosphorylates PIK3R1, the regulatory subunit of phosphatidylinositol 3-kinase, and thereby mediates activation of the AKT1 signaling pathway. Mediates activation of HRAS and of the MAP kinases MAPK1/ERK2 and/or MAPK3/ERK1. Promotes activation of STAT family members STAT1, STAT3 and STAT5A and/or STAT5B. Receptor signaling is down-regulated by protein phosphatases that dephosphorylate the receptor and its down-stream effectors, and by rapid internalization of the activated receptor. The protein is Platelet-derived growth factor receptor alpha (Pdgfra) of Rattus norvegicus (Rat).